The primary structure comprises 752 residues: MAP/microtubule affinity-regulating kinase 4 (752 aa).

The disordered stretch occupies residues 1–36 (MSSRTALAPGNDRNSDTHGTLGSGRSSDKGPSWSSR). Residues 59-310 (YRLLRTIGKG…LEQIMKDKWI (252 aa)) enclose the Protein kinase domain. Residues 65-73 (IGKGNFAKV) and Lys-88 contribute to the ATP site. The active-site Proton acceptor is Asp-181. A Phosphothreonine; by LKB1 modification is found at Thr-214. In terms of domain architecture, UBA spans 324–368 (EPEEDFGDTKRIEVMVGMGYTREEIKEALTNQKYNEVTATYLLLG). Residues 385–615 (ARVRAPSDTT…SGRPRPTTNL (231 aa)) form a disordered region. Residues 391 to 406 (SDTTNGTSSSKGSSHN) are compositionally biased toward low complexity. Residues Ser-423 and Ser-543 each carry the phosphoserine modification. The span at 544–553 (PSSHSLAPPS) shows a compositional bias: low complexity. The 50-residue stretch at 703 to 752 (AGGPEPLSHFEVEVCQLPRPGLRGVLFRRVAGTALAFRTLVTRISNDLEL) folds into the KA1 domain.

The protein belongs to the protein kinase superfamily. CAMK Ser/Thr protein kinase family. SNF1 subfamily. As to quaternary structure, interacts with MAPT/TAU. Interacts with gamma-tubulin. Interacts with ODF2. Interacts with USP9X. Interacts with YWHAQ. Interacts with NLRP3; promoting NLRP3 recruitment to microtubule organizing center (MTOC). Mg(2+) is required as a cofactor. Ubiquitinated with 'Lys-29'- and 'Lys-33'-linked polyubiquitins which appear to impede LKB1-mediated phosphorylation. Deubiquitinated by USP9X. In terms of processing, phosphorylated at Thr-214 by STK11/LKB1 in complex with STE20-related adapter-alpha (STRADA) pseudo kinase and CAB39. Phosphorylated throughout the cell cycle. In terms of tissue distribution, isoform 1 and isoform 2 show similar expression patterns in the central nervous system and are present in the same subsets of neurons including pyramidal and non-pyramidal neurons in the cerebral cortex and hippocampus, cerebellar Purkinje cells, and interneurons and motor neurons in the spinal cord but not in glial cells (at protein level). Isoform 2 is the major isoform in brain and cerebellum. Also expressed in spleen, liver, small intestine, colon, kidney, tongue, testis and lung. Isoform 1 and isoform 2 are expressed at similar levels in heart.

The protein resides in the cytoplasm. It is found in the cytoskeleton. It localises to the microtubule organizing center. Its subcellular location is the centrosome. The protein localises to the cilium axoneme. The protein resides in the cilium basal body. It is found in the cell projection. It localises to the dendrite. It catalyses the reaction L-seryl-[protein] + ATP = O-phospho-L-seryl-[protein] + ADP + H(+). It carries out the reaction L-threonyl-[protein] + ATP = O-phospho-L-threonyl-[protein] + ADP + H(+). With respect to regulation, activated by phosphorylation on Thr-214. In terms of biological role, serine/threonine-protein kinase. Phosphorylates the microtubule-associated protein MAPT/TAU. Also phosphorylates the microtubule-associated proteins MAP2 and MAP4. Involved in regulation of the microtubule network, causing reorganization of microtubules into bundles. Required for the initiation of axoneme extension during cilium assembly. Regulates the centrosomal location of ODF2 and phosphorylates ODF2 in vitro. Plays a role in cell cycle progression, specifically in the G1/S checkpoint. Reduces neuronal cell survival. Plays a role in energy homeostasis by regulating satiety and metabolic rate. Promotes adipogenesis by activating JNK1 and inhibiting the p38MAPK pathway, and triggers apoptosis by activating the JNK1 pathway. Phosphorylates mTORC1 complex member RPTOR and acts as a negative regulator of the mTORC1 complex, probably due to disruption of the interaction between phosphorylated RPTOR and the RRAGA/RRAGC heterodimer which is required for mTORC1 activation. Involved in NLRP3 positioning along microtubules by mediating NLRP3 recruitment to microtubule organizing center (MTOC) upon inflammasome activation. In Mus musculus (Mouse), this protein is MAP/microtubule affinity-regulating kinase 4.